The following is a 507-amino-acid chain: Glutamyl-tRNA(Gln) amidotransferase subunit A, mitochondrial (507 aa).

Residues 29–51 form a disordered region; the sequence is THPPEPIPPPPPPAPSSSPSPKQ. A compositionally biased stretch (pro residues) spans 31-46; that stretch reads PPEPIPPPPPPAPSSS. Catalysis depends on charge relay system residues Lys-57 and Ser-135. Ser-159 functions as the Acyl-ester intermediate in the catalytic mechanism.

Belongs to the amidase family. GatA subfamily. Subunit of the heterotrimeric GatCAB amidotransferase (AdT) complex, composed of A, B and C subunits.

Its subcellular location is the mitochondrion. It catalyses the reaction L-glutamyl-tRNA(Gln) + L-glutamine + ATP + H2O = L-glutaminyl-tRNA(Gln) + L-glutamate + ADP + phosphate + H(+). Allows the formation of correctly charged Gln-tRNA(Gln) through the transamidation of misacylated Glu-tRNA(Gln) in the mitochondria. The reaction takes place in the presence of glutamine and ATP through an activated gamma-phospho-Glu-tRNA(Gln). The polypeptide is Glutamyl-tRNA(Gln) amidotransferase subunit A, mitochondrial (Podospora anserina (strain S / ATCC MYA-4624 / DSM 980 / FGSC 10383) (Pleurage anserina)).